We begin with the raw amino-acid sequence, 403 residues long: Imidazolonepropionase (403 aa).

Fe(3+) contacts are provided by His69 and His71. Zn(2+) is bound by residues His69 and His71. 4-imidazolone-5-propanoate is bound by residues Arg78, Tyr141, and His174. Tyr141 is a binding site for N-formimidoyl-L-glutamate. His239 contributes to the Fe(3+) binding site. Residue His239 coordinates Zn(2+). A 4-imidazolone-5-propanoate-binding site is contributed by Gln242. Residue Asp314 coordinates Fe(3+). Residue Asp314 participates in Zn(2+) binding. 2 residues coordinate N-formimidoyl-L-glutamate: Asn316 and Gly318. Ser319 contributes to the 4-imidazolone-5-propanoate binding site.

It belongs to the metallo-dependent hydrolases superfamily. HutI family. The cofactor is Zn(2+). It depends on Fe(3+) as a cofactor.

Its subcellular location is the cytoplasm. It catalyses the reaction 4-imidazolone-5-propanoate + H2O = N-formimidoyl-L-glutamate. The protein operates within amino-acid degradation; L-histidine degradation into L-glutamate; N-formimidoyl-L-glutamate from L-histidine: step 3/3. Catalyzes the hydrolytic cleavage of the carbon-nitrogen bond in imidazolone-5-propanoate to yield N-formimidoyl-L-glutamate. It is the third step in the universal histidine degradation pathway. The chain is Imidazolonepropionase from Legionella pneumophila (strain Lens).